The primary structure comprises 185 residues: Peptidyl-tRNA hydrolase (185 aa).

TRNA is bound at residue Tyr-14. The Proton acceptor role is filled by His-19. TRNA is bound by residues Phe-63, Asn-65, and Asn-111.

This sequence belongs to the PTH family. Monomer.

It is found in the cytoplasm. It catalyses the reaction an N-acyl-L-alpha-aminoacyl-tRNA + H2O = an N-acyl-L-amino acid + a tRNA + H(+). Functionally, hydrolyzes ribosome-free peptidyl-tRNAs (with 1 or more amino acids incorporated), which drop off the ribosome during protein synthesis, or as a result of ribosome stalling. In terms of biological role, catalyzes the release of premature peptidyl moieties from peptidyl-tRNA molecules trapped in stalled 50S ribosomal subunits, and thus maintains levels of free tRNAs and 50S ribosomes. In Desulfitobacterium hafniense (strain Y51), this protein is Peptidyl-tRNA hydrolase.